The primary structure comprises 308 residues: Uridine diphosphate glucose pyrophosphatase NUDT22 (308 aa).

Substrate contacts are provided by phenylalanine 56, tyrosine 86, arginine 138, alanine 143, aspartate 150, histidine 155, and glutamate 157. A Nudix hydrolase domain is found at 117-284; it reads ADPLGVGAAL…KGAILLYNRH (168 aa). The short motif at 174–195 is the Nudix box element; sequence GLLVVRELFSSVLQEICDEVNL. 2 residues coordinate Mg(2+): glutamate 188 and glutamate 192. A substrate-binding site is contributed by serine 273.

This sequence belongs to the Nudix hydrolase family. Requires Mg(2+) as cofactor.

It carries out the reaction UDP-sugar + H2O = UMP + alpha-D-aldose 1-phosphate.. Hydrolyzes UDP-glucose to glucose 1-phosphate and UMP and UDP-galactose to galactose 1-phosphate and UMP. Preferred substrate is UDP-glucose. The protein is Uridine diphosphate glucose pyrophosphatase NUDT22 (Nudt22) of Mus musculus (Mouse).